A 278-amino-acid polypeptide reads, in one-letter code: MTVLHSVDFFPSGKAPVAIEPRLPQAAFPEHHHDFHEIVIVEHGTGIHVFNGQPYTISGGTVCFVRDHDRHLYEHTDNLCLTNVLWRSPEAFQFLAGLEQLLPQEQDGYYPSHWRVNQSALQQVRQLVGLMERAGDGMDAPAVANREILFMQLLVLLRRSSLMEGATDNDAKLNQLMAWLEDHFAEEVCWEAVAEQFSLSLRTLHRQLKQHTGLTPQRYLNRLRLIKARHLLRHSDHSVTEIAYRCGFGDSNHFSTLFRREFNWSPRDIRQGRDAIPQ.

Positions 174 to 272 (NQLMAWLEDH…NWSPRDIRQG (99 aa)) constitute an HTH araC/xylS-type domain. 2 consecutive DNA-binding regions (H-T-H motif) follow at residues 191–212 (EAVA…KQHT) and 239–262 (VTEI…RREF).

In terms of assembly, binds DNA as a dimer.

Its subcellular location is the cytoplasm. Activates expression of the rhaBAD and rhaT operons. This Salmonella arizonae (strain ATCC BAA-731 / CDC346-86 / RSK2980) protein is HTH-type transcriptional activator RhaS.